We begin with the raw amino-acid sequence, 141 residues long: Probable trafficking protein particle complex subunit 2 (141 aa).

It belongs to the TRAPP small subunits family. Sedlin subfamily. In terms of assembly, part of the multisubunit TRAPP (transport protein particle) complex.

It localises to the cytoplasm. It is found in the perinuclear region. The protein localises to the endoplasmic reticulum. Its subcellular location is the golgi apparatus. Its function is as follows. May play a role in vesicular transport from endoplasmic reticulum to Golgi. Required for the systemic spread of the RNAi response. In Caenorhabditis elegans, this protein is Probable trafficking protein particle complex subunit 2 (sedl-1).